Consider the following 67-residue polypeptide: Large ribosomal subunit protein uL29 (67 aa).

This sequence belongs to the universal ribosomal protein uL29 family.

The protein is Large ribosomal subunit protein uL29 of Magnetococcus marinus (strain ATCC BAA-1437 / JCM 17883 / MC-1).